The following is an 810-amino-acid chain: F-BAR domain only protein 2 (810 aa).

The F-BAR domain maps to 3 to 250 (MAYFVENFWG…NMANTTVESL (248 aa)). The mediates dimerization and binding to membranes enriched in Pi(4,5)-P2 and induces their tubulation stretch occupies residues 3–274 (MAYFVENFWG…PGLIEFEECD (272 aa)). Positions 87 to 156 (HLDLVRKLQE…CVEQERLKKE (70 aa)) form a coiled coil. Lys297 participates in a covalent cross-link: Glycyl lysine isopeptide (Lys-Gly) (interchain with G-Cter in SUMO2). A disordered region spans residues 301 to 352 (DAESVECPDADSLNIPDVDEEGYSIKPETNQNDTKENHFYSSSDSDSEDEEP). A Phosphoserine modification is found at Ser312. A Phosphothreonine modification is found at Thr385. Phosphoserine is present on residues Ser387, Ser394, and Ser403. The segment at 404–537 (NEELTKSKPS…VSRGPSPVSL (134 aa)) is disordered. Low complexity predominate over residues 433 to 456 (PSLDSSSSSSLTSSSSARPTTPLS). Phosphoserine occurs at positions 488, 493, 496, 508, 510, 511, and 533. The segment covering 502–521 (PLARAESSSSISSSASLSAA) has biased composition (low complexity). The segment at 521–810 (ANTPTVGVSR…FATGRYLADC (290 aa)) is mediates interaction with DAB2, EPS15, EPS15R and ITSN1. The MHD domain occupies 542–809 (TLPVAVALTE…RFATGRYLAD (268 aa)).

This sequence belongs to the FCHO family. Homodimer; disulfide-linked. May form homotetramer. Interacts with AP2A1. Interacts with EPS15, EPS15R, ITSN1 and ITSN2; recruit those scaffolding proteins which in turn may interact with the adaptor protein complex AP-2 at the plasma membrane. Interacts with DAB2 (via DPF motifs); mediates LDL receptor/LDLR endocytosis. In terms of processing, ubiquitinated. Mainly undergoes monoubiquitination but also polyubiquitination.

The protein resides in the membrane. Its subcellular location is the clathrin-coated pit. In terms of biological role, functions in an early step of clathrin-mediated endocytosis. Has both a membrane binding/bending activity and the ability to recruit proteins essential to the formation of functional clathrin-coated pits. Has a lipid-binding activity with a preference for membranes enriched in phosphatidylserine and phosphoinositides (Pi(4,5) biphosphate) like the plasma membrane. Its membrane-bending activity might be important for the subsequent action of clathrin and adaptors in the formation of clathrin-coated vesicles. Involved in adaptor protein complex AP-2-dependent endocytosis of the transferrin receptor, it also functions in the AP-2-independent endocytosis of the LDL receptor. This is F-BAR domain only protein 2 (FCHO2) from Homo sapiens (Human).